The following is a 249-amino-acid chain: Coproheme decarboxylase (249 aa).

Residues R131, 145–149, H172, Q185, and S223 each bind Fe-coproporphyrin III; that span reads YPMDK. Y145 is a catalytic residue.

This sequence belongs to the ChdC family. Type 1 subfamily. It depends on Fe-coproporphyrin III as a cofactor.

The enzyme catalyses Fe-coproporphyrin III + 2 H2O2 + 2 H(+) = heme b + 2 CO2 + 4 H2O. It carries out the reaction Fe-coproporphyrin III + H2O2 + H(+) = harderoheme III + CO2 + 2 H2O. The catalysed reaction is harderoheme III + H2O2 + H(+) = heme b + CO2 + 2 H2O. It participates in porphyrin-containing compound metabolism; protoheme biosynthesis. Involved in coproporphyrin-dependent heme b biosynthesis. Catalyzes the decarboxylation of Fe-coproporphyrin III (coproheme) to heme b (protoheme IX), the last step of the pathway. The reaction occurs in a stepwise manner with a three-propionate intermediate. This chain is Coproheme decarboxylase, found in Shouchella clausii (strain KSM-K16) (Alkalihalobacillus clausii).